Consider the following 395-residue polypeptide: Nitrite extrusion protein (395 aa).

The next 12 membrane-spanning stretches (helical) occupy residues 15–35 (SLVA…QITL), 44–64 (ISLV…PLGY), 73–93 (LMFM…SIAD), 96–116 (FDLI…SIGV), 133–153 (GIYG…PVIA), 160–180 (STVQ…VLFG), 203–223 (VLWF…AFTI), 240–262 (AGLR…GFLA), 271–291 (LMFV…SPTI), 293–313 (LYTF…GTVF), 330–350 (IVSA…ASVF), and 357–377 (AIGF…VIWM).

The protein belongs to the major facilitator superfamily. Nitrate/nitrite porter (TC 2.A.1.8) family.

It is found in the cell membrane. Functionally, involved in excretion of nitrite produced by the dissimilatory reduction of nitrate. This is Nitrite extrusion protein (narK) from Bacillus subtilis (strain 168).